We begin with the raw amino-acid sequence, 244 residues long: UPF0280 protein MJ1526 (244 aa).

Belongs to the UPF0280 family.

The chain is UPF0280 protein MJ1526 from Methanocaldococcus jannaschii (strain ATCC 43067 / DSM 2661 / JAL-1 / JCM 10045 / NBRC 100440) (Methanococcus jannaschii).